A 129-amino-acid polypeptide reads, in one-letter code: Glycine cleavage system H protein (129 aa).

One can recognise a Lipoyl-binding domain in the interval 24–106 (LLKIGVSEFA…IGEGWLVILK (83 aa)). K65 carries the N6-lipoyllysine modification.

It belongs to the GcvH family. The glycine cleavage system is composed of four proteins: P, T, L and H. Requires (R)-lipoate as cofactor.

Its function is as follows. The glycine cleavage system catalyzes the degradation of glycine. The H protein shuttles the methylamine group of glycine from the P protein to the T protein. In Prochlorococcus marinus (strain MIT 9312), this protein is Glycine cleavage system H protein.